The primary structure comprises 881 residues: Probable alpha/beta-glucosidase agdC (881 aa).

The first 14 residues, M1–A14, serve as a signal peptide directing secretion. N171, N293, and N373 each carry an N-linked (GlcNAc...) asparagine glycan. D422 acts as the Nucleophile in catalysis. E425 is an active-site residue. Residues Y440–L485 form a disordered region. Residues P448–G463 are compositionally biased toward pro residues. The N-linked (GlcNAc...) asparagine glycan is linked to N506. The active-site Proton donor is the D571. Residues N572, N608, and N742 are each glycosylated (N-linked (GlcNAc...) asparagine).

Belongs to the glycosyl hydrolase 31 family.

It is found in the secreted. It carries out the reaction Hydrolysis of terminal, non-reducing (1-&gt;4)-linked alpha-D-glucose residues with release of alpha-D-glucose.. The enzyme catalyses Hydrolysis of terminal, non-reducing beta-D-glucosyl residues with release of beta-D-glucose.. Glucosidase involved in the degradation of cellulosic biomass. Has both alpha- and beta-glucosidase activity. The protein is Probable alpha/beta-glucosidase agdC (agdC) of Neosartorya fischeri (strain ATCC 1020 / DSM 3700 / CBS 544.65 / FGSC A1164 / JCM 1740 / NRRL 181 / WB 181) (Aspergillus fischerianus).